Consider the following 89-residue polypeptide: Small ribosomal subunit protein uS15 (89 aa).

The protein belongs to the universal ribosomal protein uS15 family. In terms of assembly, part of the 30S ribosomal subunit. Forms a bridge to the 50S subunit in the 70S ribosome, contacting the 23S rRNA.

One of the primary rRNA binding proteins, it binds directly to 16S rRNA where it helps nucleate assembly of the platform of the 30S subunit by binding and bridging several RNA helices of the 16S rRNA. In terms of biological role, forms an intersubunit bridge (bridge B4) with the 23S rRNA of the 50S subunit in the ribosome. This is Small ribosomal subunit protein uS15 from Levilactobacillus brevis (strain ATCC 367 / BCRC 12310 / CIP 105137 / JCM 1170 / LMG 11437 / NCIMB 947 / NCTC 947) (Lactobacillus brevis).